The sequence spans 360 residues: Protein Wnt-2 (360 aa).

The first 25 residues, 1–25 (MNAPLGGIWLWLPLLLTWLTPEVSS), serve as a signal peptide directing secretion. Cystine bridges form between Cys76–Cys87, Cys127–Cys135, Cys137–Cys157, Cys206–Cys220, Cys208–Cys215, Cys278–Cys309, Cys294–Cys304, Cys308–Cys348, Cys324–Cys339, Cys326–Cys336, and Cys331–Cys332. The O-palmitoleoyl serine; by PORCN moiety is linked to residue Ser212. The N-linked (GlcNAc...) asparagine glycan is linked to Asn295.

It belongs to the Wnt family. Post-translationally, palmitoleoylation is required for efficient binding to frizzled receptors. Depalmitoleoylation leads to Wnt signaling pathway inhibition.

It localises to the secreted. The protein resides in the extracellular space. It is found in the extracellular matrix. In terms of biological role, ligand for members of the frizzled family of seven transmembrane receptors. Functions in the canonical Wnt signaling pathway that results in activation of transcription factors of the TCF/LEF family. In Dasypus novemcinctus (Nine-banded armadillo), this protein is Protein Wnt-2 (WNT2).